A 347-amino-acid chain; its full sequence is D-fructose 1,6-bisphosphatase class 2/sedoheptulose 1,7-bisphosphatase (347 aa).

Residues aspartate 33, glutamate 57, aspartate 97, and glutamate 100 each contribute to the Mn(2+) site. Substrate-binding positions include 100–102 (EGT), tyrosine 131, 176–178 (RKR), and 198–200 (DGD). Mn(2+) is bound at residue glutamate 225.

The protein belongs to the FBPase class 2 family. Homotetramer. Requires Mn(2+) as cofactor.

It carries out the reaction beta-D-fructose 1,6-bisphosphate + H2O = beta-D-fructose 6-phosphate + phosphate. It catalyses the reaction D-sedoheptulose 1,7-bisphosphate + H2O = D-sedoheptulose 7-phosphate + phosphate. Its pathway is carbohydrate biosynthesis; Calvin cycle. In terms of biological role, catalyzes the hydrolysis of fructose 1,6-bisphosphate (Fru 1,6-P2) and sedoheptulose 1,7-bisphosphate (Sed 1,7-P2) to fructose 6-phosphate and sedoheptulose 7-phosphate, respectively. The polypeptide is D-fructose 1,6-bisphosphatase class 2/sedoheptulose 1,7-bisphosphatase (Synechococcus sp. (strain JA-3-3Ab) (Cyanobacteria bacterium Yellowstone A-Prime)).